The sequence spans 415 residues: MSILSQFDPAVAEAIQHETERQEYNLELIASENFVSEAVLEAQGSVMTNKYAEGYPGKRYYGGCHHVDVVENLAIERAKELFGAEHANVQPHAGSQANMAVYNAVCQPGDTILGMNLSHGGHLTHGSPVNFSGRFYNVVPYGVSPDTETIDYNEVERLALEHKPKMIVVGASAYPRIIDFPAFRAIADKVGAKVMVDMAHIAGLVAAGVHPNPVPYAEFVTTTTHKTLRGPRGGMILCREEYAKTINSQIFPGIQGGPLMHVIAAKAVAFKEALQPEFKTYQQQIVKNAAKLAECLMAKGFKLTSGGTDNHLMLINFTGTEITGKAAEEALDKAGITVNKNTVPFETRSPFVTSGIRVGTPACTSHGLKETEMEQVAGFIADAVANIGNDEALAAIQKRVNELMKKFPLYASRLK.

Residues Leu117 and Gly121 to Leu123 each bind (6S)-5,6,7,8-tetrahydrofolate. Position 226 is an N6-(pyridoxal phosphate)lysine (Lys226). (6S)-5,6,7,8-tetrahydrofolate contacts are provided by residues Glu241 and Ser349–Phe351.

It belongs to the SHMT family. As to quaternary structure, homodimer. Pyridoxal 5'-phosphate serves as cofactor.

Its subcellular location is the cytoplasm. It carries out the reaction (6R)-5,10-methylene-5,6,7,8-tetrahydrofolate + glycine + H2O = (6S)-5,6,7,8-tetrahydrofolate + L-serine. The protein operates within one-carbon metabolism; tetrahydrofolate interconversion. It participates in amino-acid biosynthesis; glycine biosynthesis; glycine from L-serine: step 1/1. Its function is as follows. Catalyzes the reversible interconversion of serine and glycine with tetrahydrofolate (THF) serving as the one-carbon carrier. This reaction serves as the major source of one-carbon groups required for the biosynthesis of purines, thymidylate, methionine, and other important biomolecules. Also exhibits THF-independent aldolase activity toward beta-hydroxyamino acids, producing glycine and aldehydes, via a retro-aldol mechanism. This chain is Serine hydroxymethyltransferase, found in Trichlorobacter lovleyi (strain ATCC BAA-1151 / DSM 17278 / SZ) (Geobacter lovleyi).